A 118-amino-acid chain; its full sequence is Urease subunit beta (118 aa).

This sequence belongs to the urease beta subunit family. Heterotrimer of UreA (gamma), UreB (beta) and UreC (alpha) subunits. Three heterotrimers associate to form the active enzyme.

The protein resides in the cytoplasm. It catalyses the reaction urea + 2 H2O + H(+) = hydrogencarbonate + 2 NH4(+). Its pathway is nitrogen metabolism; urea degradation; CO(2) and NH(3) from urea (urease route): step 1/1. The sequence is that of Urease subunit beta from Aliivibrio fischeri (strain MJ11) (Vibrio fischeri).